A 105-amino-acid chain; its full sequence is RxLR effector protein PITG_18670 (105 aa).

Positions 1 to 21 (MRSIFYFALAFAALTCSNASA) are cleaved as a signal peptide. The RxLR-dEER motif lies at 39–57 (RSLRVAGQEVARGDRGEEI).

The protein belongs to the RxLR effector family.

It is found in the secreted. It localises to the host nucleus. The protein localises to the host nucleolus. The protein resides in the host cytoplasm. Effector that enhances P.infestans colonization of Nicotiana benthamiana leaves. This is RxLR effector protein PITG_18670 from Phytophthora infestans (strain T30-4) (Potato late blight agent).